We begin with the raw amino-acid sequence, 434 residues long: Adenylosuccinate synthetase (434 aa).

GTP contacts are provided by residues 22 to 28 (GDEGKGK) and 50 to 52 (GHT). The active-site Proton acceptor is Asp-23. Positions 23 and 50 each coordinate Mg(2+). IMP-binding positions include 23–26 (DEGK), 48–51 (NAGH), Thr-139, Arg-153, Gln-234, Thr-249, and Arg-313. Residue His-51 is the Proton donor of the active site. Position 309 to 315 (309 to 315 (ATTGRKR)) interacts with substrate. Residues Arg-315, 341-343 (KLD), and 423-425 (SVG) contribute to the GTP site.

It belongs to the adenylosuccinate synthetase family. In terms of assembly, homodimer. Mg(2+) is required as a cofactor.

The protein resides in the cytoplasm. The catalysed reaction is IMP + L-aspartate + GTP = N(6)-(1,2-dicarboxyethyl)-AMP + GDP + phosphate + 2 H(+). It functions in the pathway purine metabolism; AMP biosynthesis via de novo pathway; AMP from IMP: step 1/2. Its function is as follows. Plays an important role in the de novo pathway of purine nucleotide biosynthesis. Catalyzes the first committed step in the biosynthesis of AMP from IMP. The chain is Adenylosuccinate synthetase from Chlorobium phaeovibrioides (strain DSM 265 / 1930) (Prosthecochloris vibrioformis (strain DSM 265)).